Reading from the N-terminus, the 1507-residue chain is Chromatin-remodeling ATPase INO80 (1507 aa).

Disordered regions lie at residues 30 to 82 and 428 to 452; these read PEDE…DAED and RKKQ…KRQQ. Positions 38–67 are enriched in polar residues; that stretch reads GSSSQDESRSTQGGVVANYSNGSKSRMNAS. Positions 350–475 constitute a DBINO domain; it reads AWINIVRRDI…SHFMQNKTDS (126 aa). Residues 428-450 are compositionally biased toward basic and acidic residues; it reads RKKQEKEAAEAFKREQEQRESKR. One can recognise a Helicase ATP-binding domain in the interval 598 to 769; that stretch reads VNCYEQGLNG…WALLHFIMPM (172 aa). 611 to 618 lines the ATP pocket; that stretch reads DEMGLGKT. The Helicase C-terminal domain occupies 1210-1360; sequence TLDILLKRLR…QLVMTGGHVQ (151 aa). Positions 1415–1507 are disordered; that stretch reads LEELEDVDRQ…KGFDPSSSAN (93 aa). A compositionally biased stretch (polar residues) spans 1491–1507; the sequence is ASVTESNKGFDPSSSAN.

The protein belongs to the SNF2/RAD54 helicase family. Component of the INO80 chromatin-remodeling complex. Associates with REF6/EIN6.

It localises to the nucleus. The catalysed reaction is ATP + H2O = ADP + phosphate + H(+). ATPase component of the chromatin remodeling INO80 complex which is involved in transcriptional regulation, DNA replication and DNA repair. Binds DNA. As part of the INO80 complex, remodels chromatin by shifting nucleosomes. The INO80 complex controls ethylene-induced H2A.Z eviction dynamics. Positive regulator of homologous recombination, but not an essential component of homologous recombination. Not involved in the illegitimate repair pathway. The protein is Chromatin-remodeling ATPase INO80 of Arabidopsis thaliana (Mouse-ear cress).